The sequence spans 125 residues: Fluoride-specific ion channel FluC (125 aa).

The next 4 helical transmembrane spans lie at 1-21 (MIQA…RYYV), 32-52 (AFPW…GVFA), 68-88 (LLIT…LDAI), and 101-121 (IYIA…LAVM). Na(+) contacts are provided by Gly75 and Thr78.

The protein belongs to the fluoride channel Fluc/FEX (TC 1.A.43) family.

The protein resides in the cell inner membrane. It catalyses the reaction fluoride(in) = fluoride(out). Na(+) is not transported, but it plays an essential structural role and its presence is essential for fluoride channel function. In terms of biological role, fluoride-specific ion channel. Important for reducing fluoride concentration in the cell, thus reducing its toxicity. This chain is Fluoride-specific ion channel FluC, found in Rhizobium etli (strain CIAT 652).